The following is a 175-amino-acid chain: Anterior gradient protein 2 homolog (175 aa).

The first 20 residues, 1 to 20 (MEKIPVSAFLLLVALSYTLA), serve as a signal peptide directing secretion. The interval 21–40 (RDTTVKPGAKKDTKDSRPKL) is required to promote cell adhesion. 2 short sequence motifs (homodimer stabilization; interchain) span residues 45–54 (SRGWGDQLIW) and 60–67 (EALYKSKT).

It belongs to the AGR family. As to quaternary structure, monomer and homodimer. Interacts with LYPD3 and DAG1 (alphaDAG1). Interacts with MUC2; disulfide-linked. As to expression, expressed strongly in trachea, lung, stomach, colon, prostate and small intestine. Expressed weakly in pituitary gland, salivary gland, mammary gland, bladder, appendix, ovary, fetal lung, uterus, pancreas, kidney, fetal kidney, testis, placenta, thyroid gland and in estrogen receptor (ER)-positive breast cancer cell lines.

The protein localises to the secreted. Its subcellular location is the endoplasmic reticulum. Required for MUC2 post-transcriptional synthesis and secretion. May play a role in the production of mucus by intestinal cells. Proto-oncogene that may play a role in cell migration, cell differentiation and cell growth. Promotes cell adhesion. In Homo sapiens (Human), this protein is Anterior gradient protein 2 homolog (AGR2).